The chain runs to 569 residues: Cytosolic purine 5'-nucleotidase (569 aa).

Asp52 functions as the Nucleophile in the catalytic mechanism. The IMP site is built by Asp52 and Asp54. Residues Asp52 and Asp54 each contribute to the Mg(2+) site. The active-site Proton donor is the Asp54. Positions 144 and 154 each coordinate ATP. Residues Arg202, Asp206, Lys215, Thr249, Asn250, Ser251, and Lys292 each contribute to the IMP site. A Mg(2+)-binding site is contributed by Asp351. Residues Gln453 and Arg456 each contribute to the ATP site. Residues 527–569 (SISEIKPPNLFPQAPQEITHCHDEDDDEEEEEEEVEEEEEEEE) form a disordered region. Residues 548 to 569 (HDEDDDEEEEEEEVEEEEEEEE) form a required for tetramer assembly region. The span at 550-569 (EDDDEEEEEEEVEEEEEEEE) shows a compositional bias: acidic residues.

It belongs to the 5'(3')-deoxyribonucleotidase family. As to quaternary structure, homotetramer. The cofactor is Mg(2+).

Its subcellular location is the cytoplasm. It localises to the cytosol. The catalysed reaction is a ribonucleoside 5'-phosphate + H2O = a ribonucleoside + phosphate. It catalyses the reaction a 2'-deoxyribonucleoside + a ribonucleoside 5'-phosphate = a ribonucleoside + a 2'-deoxyribonucleoside 5'-phosphate. It carries out the reaction IMP + H2O = inosine + phosphate. The enzyme catalyses GMP + H2O = guanosine + phosphate. The catalysed reaction is dGMP + H2O = 2'-deoxyguanosine + phosphate. It catalyses the reaction dIMP + H2O = 2'-deoxyinosine + phosphate. It carries out the reaction XMP + H2O = xanthosine + phosphate. The enzyme catalyses inosine + GMP = guanosine + IMP. The catalysed reaction is dGMP + inosine = 2'-deoxyguanosine + IMP. It catalyses the reaction dIMP + inosine = 2'-deoxyinosine + IMP. It carries out the reaction inosine + UMP = uridine + IMP. The enzyme catalyses inosine + CMP = cytidine + IMP. The catalysed reaction is inosine + AMP = IMP + adenosine. With respect to regulation, allosterically activated by various compounds including ATP, 2,3-BPG/2,3-Bisphosphoglyceric acid and Ap4A/P1,P4-bis(5'-adenosyl) tetraphosphate. Binding of an allosteric activator is a prerequisiste to magnesium and substrate binding. Inhibited by inorganic phosphate. Inhibited by inosine, guanosine, p-chloromercuribenzoate and NaF. Broad specificity cytosolic 5'-nucleotidase that catalyzes the dephosphorylation of 6-hydroxypurine nucleoside 5'-monophosphates. In addition, possesses a phosphotransferase activity by which it can transfer a phosphate from a donor nucleoside monophosphate to an acceptor nucleoside, preferably inosine, deoxyinosine and guanosine. Has the highest activities for IMP and GMP followed by dIMP, dGMP and XMP. Could also catalyze the transfer of phosphates from pyrimidine monophosphates but with lower efficiency. Through these activities regulates the purine nucleoside/nucleotide pools within the cell. In Gallus gallus (Chicken), this protein is Cytosolic purine 5'-nucleotidase (NT5C2).